We begin with the raw amino-acid sequence, 307 residues long: Pseudouridine-5'-phosphate glycosidase (307 aa).

Residue Glu-25 is the Proton donor of the active site. Substrate contacts are provided by Lys-86 and Val-106. A Mn(2+)-binding site is contributed by Asp-138. Residue 140–142 (SAD) participates in substrate binding. Lys-159 functions as the Nucleophile in the catalytic mechanism.

It belongs to the pseudouridine-5'-phosphate glycosidase family. As to quaternary structure, homotrimer. It depends on Mn(2+) as a cofactor.

The enzyme catalyses D-ribose 5-phosphate + uracil = psi-UMP + H2O. In terms of biological role, catalyzes the reversible cleavage of pseudouridine 5'-phosphate (PsiMP) to ribose 5-phosphate and uracil. Functions biologically in the cleavage direction, as part of a pseudouridine degradation pathway. The chain is Pseudouridine-5'-phosphate glycosidase from Caldanaerobacter subterraneus subsp. tengcongensis (strain DSM 15242 / JCM 11007 / NBRC 100824 / MB4) (Thermoanaerobacter tengcongensis).